Here is a 168-residue protein sequence, read N- to C-terminus: 2-C-methyl-D-erythritol 2,4-cyclodiphosphate synthase (168 aa).

Residues aspartate 13 and histidine 15 each coordinate a divalent metal cation. 4-CDP-2-C-methyl-D-erythritol 2-phosphate-binding positions include 13–15 (DVH) and 39–40 (HS). Histidine 47 is a binding site for a divalent metal cation. 4-CDP-2-C-methyl-D-erythritol 2-phosphate is bound by residues 61–63 (DIG), 66–70 (FPDTD), phenylalanine 144, and lysine 147.

The protein belongs to the IspF family. In terms of assembly, homotrimer. A divalent metal cation is required as a cofactor.

It carries out the reaction 4-CDP-2-C-methyl-D-erythritol 2-phosphate = 2-C-methyl-D-erythritol 2,4-cyclic diphosphate + CMP. It functions in the pathway isoprenoid biosynthesis; isopentenyl diphosphate biosynthesis via DXP pathway; isopentenyl diphosphate from 1-deoxy-D-xylulose 5-phosphate: step 4/6. Functionally, involved in the biosynthesis of isopentenyl diphosphate (IPP) and dimethylallyl diphosphate (DMAPP), two major building blocks of isoprenoid compounds. Catalyzes the conversion of 4-diphosphocytidyl-2-C-methyl-D-erythritol 2-phosphate (CDP-ME2P) to 2-C-methyl-D-erythritol 2,4-cyclodiphosphate (ME-CPP) with a corresponding release of cytidine 5-monophosphate (CMP). This Cupriavidus metallidurans (strain ATCC 43123 / DSM 2839 / NBRC 102507 / CH34) (Ralstonia metallidurans) protein is 2-C-methyl-D-erythritol 2,4-cyclodiphosphate synthase.